Consider the following 249-residue polypeptide: Small ribosomal subunit protein eS6 (249 aa).

Basic residues predominate over residues 223–238 (LRQRDHSKKHTRKVHA). A disordered region spans residues 223 to 249 (LRQRDHSKKHTRKVHAQRAEVAAFQKK).

Belongs to the eukaryotic ribosomal protein eS6 family. Ribosomal protein S6 is the major substrate of protein kinases in eukaryote ribosomes.

Component of the 40S small ribosomal subunit. Plays an important role in controlling cell growth and proliferation through the selective translation of particular classes of mRNA. The chain is Small ribosomal subunit protein eS6 (RPS6) from Leishmania major.